Reading from the N-terminus, the 564-residue chain is MFS-type transporter grgE (564 aa).

A compositionally biased stretch (basic and acidic residues) spans 1–10 (MAENQVDPKR). Residues 1–52 (MAENQVDPKRNLPLYGAADESTSATDKEDEVENVRQNGSAPPIEEARESNEA) form a disordered region. The N-linked (GlcNAc...) asparagine glycan is linked to N37. Transmembrane regions (helical) follow at residues 60–80 (HGLSLFFIVLAIMLATFIISL), 101–118 (KVSWYGSAYFMTFGGFQT), 131–151 (TTFLVSLFIFEIGSLICGVAP), 161–181 (AIAGLGGAGMATGGFTIIAFS), 192–212 (GLVGSAYGLSAVAGPLIGGAF), 220–240 (WCFYINLPVGGLAAVIILIFF), and 262–282 (LVGVSLLMCLIICFILALQYG). N289 is a glycosylation site (N-linked (GlcNAc...) asparagine). 7 consecutive transmembrane segments (helical) span residues 293–313 (VIGLLVGFVAILVALIIWEYY), 329–349 (ALWAPSTYMFFFAGSYFILLY), 368–388 (VRNLPMVVTFSIAAILAGAFV), 392–412 (GIATPVMLVGAAIATIGTGLI), 425–445 (IGYQILAAFGFVIPWLIPMNI), 462–482 (IFLAQTLGGAFSVSAAQSAFV), and 531–551 (TFAISVGMVGFACLMGLFTPW).

It belongs to the major facilitator superfamily.

The protein resides in the membrane. In terms of biological role, MFS-type transporter; part of the gene cluster that mediates the biosynthesis of gregatin A, a fungal polyketide featuring an alkylated furanone core. This chain is MFS-type transporter grgE, found in Penicillium sp.